The sequence spans 490 residues: ATP synthase subunit beta, chloroplastic (490 aa).

170–177 (GGAGVGKT) lines the ATP pocket.

The protein belongs to the ATPase alpha/beta chains family. As to quaternary structure, F-type ATPases have 2 components, CF(1) - the catalytic core - and CF(0) - the membrane proton channel. CF(1) has five subunits: alpha(3), beta(3), gamma(1), delta(1), epsilon(1). CF(0) has four main subunits: a(1), b(1), b'(1) and c(9-12).

It localises to the plastid. It is found in the chloroplast thylakoid membrane. The enzyme catalyses ATP + H2O + 4 H(+)(in) = ADP + phosphate + 5 H(+)(out). Functionally, produces ATP from ADP in the presence of a proton gradient across the membrane. The catalytic sites are hosted primarily by the beta subunits. This chain is ATP synthase subunit beta, chloroplastic, found in Pinus koraiensis (Korean pine).